The chain runs to 284 residues: Pantothenate synthetase (284 aa).

An ATP-binding site is contributed by 30–37; the sequence is MGNLHDGH. His-37 serves as the catalytic Proton donor. Gln-61 contacts (R)-pantoate. Residue Gln-61 participates in beta-alanine binding. Position 149-152 (149-152) interacts with ATP; sequence GEKD. Gln-155 provides a ligand contact to (R)-pantoate. ATP is bound by residues Val-178 and 186–189; that span reads LSSR.

This sequence belongs to the pantothenate synthetase family. As to quaternary structure, homodimer.

The protein resides in the cytoplasm. The enzyme catalyses (R)-pantoate + beta-alanine + ATP = (R)-pantothenate + AMP + diphosphate + H(+). The protein operates within cofactor biosynthesis; (R)-pantothenate biosynthesis; (R)-pantothenate from (R)-pantoate and beta-alanine: step 1/1. Catalyzes the condensation of pantoate with beta-alanine in an ATP-dependent reaction via a pantoyl-adenylate intermediate. This is Pantothenate synthetase from Cronobacter sakazakii (strain ATCC BAA-894) (Enterobacter sakazakii).